A 677-amino-acid chain; its full sequence is Beta-galactosidase (677 aa).

An N-terminal signal peptide occupies residues 1 to 23 (MPGFLVRILPLLLALLLLGPTRG). A propeptide spanning residues 24 to 28 (LRNAT) is cleaved from the precursor. N-linked (GlcNAc...) asparagine glycosylation is present at Asn-26. Substrate is bound by residues Tyr-83, Glu-129, and Asn-187. Glu-188 serves as the catalytic Proton donor. An intrachain disulfide couples Cys-195 to Cys-230. A glycan (N-linked (GlcNAc...) asparagine) is linked at Asn-247. Catalysis depends on Glu-268, which acts as the Nucleophile. Position 333 (Tyr-333) interacts with substrate. N-linked (GlcNAc...) asparagine glycosylation is found at Asn-464, Asn-498, Asn-545, and Asn-555. Cys-626 and Cys-634 are disulfide-bonded. The tract at residues 654–677 (SKPVEKKLMPSPPQKNKDSWLDHV) is disordered. The span at 668–677 (KNKDSWLDHV) shows a compositional bias: basic and acidic residues.

It belongs to the glycosyl hydrolase 35 family. Homodimer. May form higher multimers.

It localises to the lysosome. The enzyme catalyses Hydrolysis of terminal non-reducing beta-D-galactose residues in beta-D-galactosides.. In terms of biological role, cleaves beta-linked terminal galactosyl residues from gangliosides, glycoproteins, and glycosaminoglycans. The chain is Beta-galactosidase (GLB1) from Pongo abelii (Sumatran orangutan).